A 1732-amino-acid chain; its full sequence is Transient receptor potential cation channel subfamily M member 3 (1732 aa).

At 1–894 (MPGPWGTVYF…RKIYEFYNAP (894 aa)) the chain is on the cytoplasmic side. 5 calmodulin-binding regions span residues 41 to 64 (WTIRKLCHAAFLPSVRLLKAQKSW), 192 to 215 (NFELQPKLKQVFGKGLIKAAMTTG), 300 to 323 (TGKYGAEVKLRRQLEKHISLQKIN), 601 to 624 (RKRFRTLYHNLFGPKRPKALKLLG), and 793 to 816 (RKNSGLKVILGILLPPSILSLEFK). Residues 617 to 625 (PKALKLLGM) are required for the inhibitory action of G-beta/gamma-subunits of heterotrimeric G-proteins. Position 796 (Ser796) interacts with 1,2-dioctanoyl-sn-glycero-3-phospho-(1D-myo-inositol-4,5-bisphosphate). Positions 829 to 851 (EIHLQEKEPEEPEKPTKEKDEED) are disordered. Over residues 831 to 847 (HLQEKEPEEPEKPTKEK) the composition is skewed to basic and acidic residues. A helical membrane pass occupies residues 895–918 (IVKFWFYTLAYIGYLMLFNYIVLV). Over 919–925 (KMERWPS) the chain is Extracellular. A helical transmembrane segment spans residues 926 to 948 (TQEWIVISYIFTLGIEKMREILM). Over 949–964 (SEPGKLLQKVKVWLQE) the chain is Cytoplasmic. A helical membrane pass occupies residues 965–985 (YWNVTDLIAILLFSVGMILRL). Residues 986–989 (QDQP) lie on the Extracellular side of the membrane. A helical membrane pass occupies residues 990–1013 (FRSDGRVIYCVNIIYWYIRLLDIF). The Cytoplasmic portion of the chain corresponds to 1014–1028 (GVNKYLGPYVMMIGK). 1,2-dioctanoyl-sn-glycero-3-phospho-(1D-myo-inositol-4,5-bisphosphate) contacts are provided by Lys1017 and Tyr1018. Residues 1029–1056 (MMIDMMYFVIIMLVVLMSFGVARQAILF) form a helical membrane-spanning segment. The Extracellular segment spans residues 1057 to 1073 (PNEEPSWKLAKNIFYMP). An intramembrane region (pore-forming) is located at residues 1074-1101 (YWMIYGEVFADQIDPPCGQNETREDGKT). Residues 1102–1111 (IQLPPCKTGA) are Extracellular-facing. Residues 1112–1137 (WIVPAIMACYLLVANILLVNLLIAVF) traverse the membrane as a helical segment. Over 1138–1732 (NNTFFEVKSI…AFHSFESKHN (595 aa)) the chain is Cytoplasmic. The segment at 1610 to 1732 (EREAELSHPS…AFHSFESKHN (123 aa)) is disordered. Composition is skewed to polar residues over residues 1635-1653 (PISSQEAENADRTLSNNIT) and 1690-1701 (NTASLRNPFQRS).

Belongs to the transient receptor (TC 1.A.4) family. LTrpC subfamily. TRPM3 sub-subfamily. Homotetramer. Interacts with TRPM1; the interaction results in the formation of a heteromultimeric cation channel complex that are functionally different from the homomeric channels.

Its subcellular location is the cell membrane. The catalysed reaction is Ca(2+)(in) = Ca(2+)(out). The enzyme catalyses Mn(2+)(in) = Mn(2+)(out). It carries out the reaction Zn(2+)(in) = Zn(2+)(out). It catalyses the reaction Mg(2+)(in) = Mg(2+)(out). The catalysed reaction is Na(+)(in) = Na(+)(out). Its activity is regulated as follows. Activated by the neurosteroid pregnelonone sulfate (PregS). PregS activates the channel by shifting its current-voltage activation curve toward more negative membrane potentials and also potentiates temperature-induced activation. Activated by heat. Intracellular Ca(2+) inhibits TRPM3 probably via interaction with Ca(2+)/calmodulin. Intracellular Mg(2+) inhibits TRPM3 activity. Both intracellular and extracellular protons block TRPM3 through propable binding sites in the pore region. Positively regulated by phosphoinositide phosphoinositol 4,5-biphosphate (PI(4,5)P2). Strongly inhibited by activation of G(i)-coupled receptors via direct binding with G-beta/gamma-subunits of heterotrimeric G-proteins. With respect to regulation, insensitive to pregnenolone sulfate (PregS) or heat. Not inhibited by G-beta/gamma-subunits of heterotrimeric G-proteins. Constitutively active, non-selective divalent cation-conducting channel that is permeable to Ca(2+), Mn(2+), and Mg(2+), with a high permeability for Ca(2+). However, can be enhanced by increasing temperature and by ligands, including the endogenous neurosteroid pregnenolone sulfate and sphingosine-1 and suppressed by intracellular Mg(2+). Implicated in a variety of cellular processes, including insulin/peptide secretion, vascular constriction and dilation, noxious heat sensing, inflammatory and spontaneous pain sensitivity. In neurons of the dorsal root ganglia, functions as thermosensitive channel for the detection of noxious heat and spontaneous pain. Suggested to function as an ionotropic steroid receptor in beta-cell, indeed pregnenolone sulfate leads to Ca(2+) influx and enhanced insulin secretion. Mediates Zn(2+) uptake into the lumen of pancreatic beta cell secretory granules, thereby regulating insulin secretion. Forms heteromultimeric ion channels with TRPM1 which are permeable for Ca(2+) and Zn(2+) ions. Exists as multiple splice variants which differ significantly in their biophysical properties. Its function is as follows. Displays strongly reduced permeability for divalent cations and high selectivity toward monovalent cations. Functionally, no channel activity. The polypeptide is Transient receptor potential cation channel subfamily M member 3 (Mus musculus (Mouse)).